The sequence spans 570 residues: Urease subunit alpha 1 (570 aa).

One can recognise a Urease domain in the interval 131–570 (GGIDTHVHFI…VPMAQRYFLF (440 aa)). Positions 136, 138, and 219 each coordinate Ni(2+). Position 219 is an N6-carboxylysine (K219). H221 contacts substrate. Ni(2+) is bound by residues H248 and H274. H322 acts as the Proton donor in catalysis. D362 contributes to the Ni(2+) binding site.

The protein belongs to the metallo-dependent hydrolases superfamily. Urease alpha subunit family. As to quaternary structure, heterotrimer of UreA (gamma), UreB (beta) and UreC (alpha) subunits. Three heterotrimers associate to form the active enzyme. Ni cation serves as cofactor. Carboxylation allows a single lysine to coordinate two nickel ions.

It localises to the cytoplasm. It carries out the reaction urea + 2 H2O + H(+) = hydrogencarbonate + 2 NH4(+). The protein operates within nitrogen metabolism; urea degradation; CO(2) and NH(3) from urea (urease route): step 1/1. Its function is as follows. May protect brucellae during their passage through the stomach. The major route of infection in human brucellosis is oral. The protein is Urease subunit alpha 1 of Brucella abortus (strain 2308).